The following is a 644-amino-acid chain: Threonine--tRNA ligase (644 aa).

Positions 8 to 70 (VKAMVITLRD…EEDGELEILT (63 aa)) constitute a TGS domain. The catalytic stretch occupies residues 251–541 (DHRKLGKELD…LTEHFAGAFP (291 aa)). The Zn(2+) site is built by cysteine 342, histidine 393, and histidine 518.

It belongs to the class-II aminoacyl-tRNA synthetase family. In terms of assembly, homodimer. Zn(2+) serves as cofactor.

It is found in the cytoplasm. The enzyme catalyses tRNA(Thr) + L-threonine + ATP = L-threonyl-tRNA(Thr) + AMP + diphosphate + H(+). Functionally, catalyzes the attachment of threonine to tRNA(Thr) in a two-step reaction: L-threonine is first activated by ATP to form Thr-AMP and then transferred to the acceptor end of tRNA(Thr). Also edits incorrectly charged L-seryl-tRNA(Thr). In Caldanaerobacter subterraneus subsp. tengcongensis (strain DSM 15242 / JCM 11007 / NBRC 100824 / MB4) (Thermoanaerobacter tengcongensis), this protein is Threonine--tRNA ligase.